Reading from the N-terminus, the 462-residue chain is Asparagine--tRNA ligase (462 aa).

This sequence belongs to the class-II aminoacyl-tRNA synthetase family. As to quaternary structure, homodimer.

Its subcellular location is the cytoplasm. It catalyses the reaction tRNA(Asn) + L-asparagine + ATP = L-asparaginyl-tRNA(Asn) + AMP + diphosphate + H(+). This is Asparagine--tRNA ligase from Synechocystis sp. (strain ATCC 27184 / PCC 6803 / Kazusa).